The primary structure comprises 500 residues: Formate-nitrite transporter 3 (500 aa).

The Cytoplasmic portion of the chain corresponds to 1–31 (MVLAASPEAYRKVIEYGIKKTKLRIDRLFLQ). A helical transmembrane segment spans residues 32–52 (AIMAGIYVGMAGHACTALAGA). The Extracellular portion of the chain corresponds to 53–69 (YSTDPANPLAVSKATQK). Residues 70-90 (FLYASLFPVAFIAIIFTGAEL) form a helical membrane-spanning segment. Residues 91–113 (FTGNTMTMLVCLLERRVTALQLC) lie on the Cytoplasmic side of the membrane. A helical membrane pass occupies residues 114–134 (INWICSLVGNWAGALFAAYFL). Residues 135 to 164 (SYLPGVLQDPDHLHYLEDVAAHKTELSFLQ) lie on the Extracellular side of the membrane. A helical transmembrane segment spans residues 165–185 (CFCLAVGCNTFVCLAVWFVIA). At 186 to 192 (SDDAAGK) the chain is on the cytoplasmic side. The chain crosses the membrane as a helical span at residues 193–213 (IMSMWFPIVSFCVAGYEHIIA). Topologically, residues 214 to 237 (NFYTLQCALMHGVGPGVGTVILKN) are extracellular. Residues 238–258 (FIPTLLGNIVGGCGLVGAVYW) traverse the membrane as a helical segment. Topologically, residues 259-500 (YNFYPTVCVV…ALEEHPASTI (242 aa)) are cytoplasmic. Positions 411 to 500 (PLRENSGVPS…ALEEHPASTI (90 aa)) are disordered. Composition is skewed to basic and acidic residues over residues 428–444 (GRVR…RGGE) and 466–485 (FHPH…ETRV).

It belongs to the FNT transporter (TC 1.A.16) family. In terms of assembly, homopentamer.

It localises to the cell membrane. The enzyme catalyses (S)-lactate(in) + H(+)(in) = (S)-lactate(out) + H(+)(out). It carries out the reaction formate(in) + H(+)(in) = formate(out) + H(+)(out). The catalysed reaction is pyruvate(out) + H(+)(out) = pyruvate(in) + H(+)(in). It catalyses the reaction acetate(out) + H(+)(out) = acetate(in) + H(+)(in). Inhibited by p-chloromercuribenzene sulfonate (pCMBS). Methyl methanethiosulfonate (MMTS) inhibits L-lactate but not formate transport. Inhibited by the Malaria Box compound MMV007839. Inhibited by BH-296, BH-317, BH-326 and BH-388 compounds. Functionally, monocarboxylate-proton symporter; active in acidic-to-neutral pH range. Transports L-lactate and formate. The sequence is that of Formate-nitrite transporter 3 from Toxoplasma gondii (strain ATCC 50611 / Me49).